A 623-amino-acid polypeptide reads, in one-letter code: Chaperone protein HtpG (623 aa).

The interval 1 to 336 is a; substrate-binding; the sequence is MVSKQQTMGF…ASDLPLNISR (336 aa). The segment at 337-550 is b; sequence EILQDNKQVE…EQDMGLEMQR (214 aa). Residues 551-623 form a c region; that stretch reads ILQAAGQQVP…NRVNRLLVSS (73 aa).

It belongs to the heat shock protein 90 family. In terms of assembly, homodimer.

It localises to the cytoplasm. Molecular chaperone. Has ATPase activity. This is Chaperone protein HtpG from Legionella pneumophila subsp. pneumophila (strain Philadelphia 1 / ATCC 33152 / DSM 7513).